The sequence spans 295 residues: Tyrosine recombinase XerC (295 aa).

A Core-binding (CB) domain is found at 1 to 85 (MQNALQKYYD…ALRQFLAYLV (85 aa)). The Tyr recombinase domain occupies 106–285 (YLPKNIDQEQ…DFKHLTDVYD (180 aa)). Residues Arg145, Lys169, His237, Arg240, and His263 contribute to the active site. Tyr272 (O-(3'-phospho-DNA)-tyrosine intermediate) is an active-site residue.

Belongs to the 'phage' integrase family. XerC subfamily. In terms of assembly, forms a cyclic heterotetrameric complex composed of two molecules of XerC and two molecules of XerD.

It localises to the cytoplasm. Site-specific tyrosine recombinase, which acts by catalyzing the cutting and rejoining of the recombining DNA molecules. The XerC-XerD complex is essential to convert dimers of the bacterial chromosome into monomers to permit their segregation at cell division. It also contributes to the segregational stability of plasmids. The sequence is that of Tyrosine recombinase XerC from Actinobacillus succinogenes (strain ATCC 55618 / DSM 22257 / CCUG 43843 / 130Z).